The sequence spans 1068 residues: Carbamoyl phosphate synthase large chain (1068 aa).

Positions 1–401 (MPLNKDIKKV…AFLKGTRSLE (401 aa)) are carboxyphosphate synthetic domain. Residues R129, R169, G175, G176, K208, V210, E215, G241, I242, H243, Q284, and E298 each contribute to the ATP site. Residues 133 to 327 (RNVMSRINGP…IAKVASKIAL (195 aa)) enclose the ATP-grasp 1 domain. Q284, E298, and N300 together coordinate Mg(2+). The Mn(2+) site is built by Q284, E298, and N300. The oligomerization domain stretch occupies residues 402-549 (IGKYSLEHKK…YSTYDVYDEV (148 aa)). The carbamoyl phosphate synthetic domain stretch occupies residues 550 to 932 (EVSKNKKVIV…ALYKGFIGAN (383 aa)). Residues 674 to 864 (DELLEKLKIA…IVDIATRVML (191 aa)) enclose the ATP-grasp 2 domain. Positions 710, 749, 751, 755, 780, 781, 782, 783, 823, and 835 each coordinate ATP. The Mg(2+) site is built by Q823, E835, and N837. 3 residues coordinate Mn(2+): Q823, E835, and N837. Positions 933–1068 (MSIKKEKGTV…ETLYIFDLSN (136 aa)) constitute an MGS-like domain. The tract at residues 933-1068 (MSIKKEKGTV…ETLYIFDLSN (136 aa)) is allosteric domain.

It belongs to the CarB family. Composed of two chains; the small (or glutamine) chain promotes the hydrolysis of glutamine to ammonia, which is used by the large (or ammonia) chain to synthesize carbamoyl phosphate. Tetramer of heterodimers (alpha,beta)4. Mg(2+) serves as cofactor. The cofactor is Mn(2+).

The enzyme catalyses hydrogencarbonate + L-glutamine + 2 ATP + H2O = carbamoyl phosphate + L-glutamate + 2 ADP + phosphate + 2 H(+). It carries out the reaction hydrogencarbonate + NH4(+) + 2 ATP = carbamoyl phosphate + 2 ADP + phosphate + 2 H(+). It functions in the pathway amino-acid biosynthesis; L-arginine biosynthesis; carbamoyl phosphate from bicarbonate: step 1/1. The protein operates within pyrimidine metabolism; UMP biosynthesis via de novo pathway; (S)-dihydroorotate from bicarbonate: step 1/3. Functionally, large subunit of the glutamine-dependent carbamoyl phosphate synthetase (CPSase). CPSase catalyzes the formation of carbamoyl phosphate from the ammonia moiety of glutamine, carbonate, and phosphate donated by ATP, constituting the first step of 2 biosynthetic pathways, one leading to arginine and/or urea and the other to pyrimidine nucleotides. The large subunit (synthetase) binds the substrates ammonia (free or transferred from glutamine from the small subunit), hydrogencarbonate and ATP and carries out an ATP-coupled ligase reaction, activating hydrogencarbonate by forming carboxy phosphate which reacts with ammonia to form carbamoyl phosphate. The chain is Carbamoyl phosphate synthase large chain from Clostridium botulinum (strain Kyoto / Type A2).